We begin with the raw amino-acid sequence, 148 residues long: UPF0260 protein ECA2365 (148 aa).

It belongs to the UPF0260 family.

This chain is UPF0260 protein ECA2365, found in Pectobacterium atrosepticum (strain SCRI 1043 / ATCC BAA-672) (Erwinia carotovora subsp. atroseptica).